The following is a 396-amino-acid chain: 1-deoxy-D-xylulose 5-phosphate reductoisomerase (396 aa).

Residues Thr-10, Gly-11, Ser-12, Ile-13, and Asn-123 each coordinate NADPH. Lys-124 is a 1-deoxy-D-xylulose 5-phosphate binding site. Glu-125 is an NADPH binding site. Asp-149 provides a ligand contact to Mn(2+). 1-deoxy-D-xylulose 5-phosphate-binding residues include Ser-150, Glu-151, Ser-185, and His-208. Glu-151 serves as a coordination point for Mn(2+). Gly-214 contacts NADPH. 1-deoxy-D-xylulose 5-phosphate-binding residues include Ser-221, Asn-226, Lys-227, and Glu-230. Glu-230 contacts Mn(2+).

It belongs to the DXR family. The cofactor is Mg(2+). Requires Mn(2+) as cofactor.

The catalysed reaction is 2-C-methyl-D-erythritol 4-phosphate + NADP(+) = 1-deoxy-D-xylulose 5-phosphate + NADPH + H(+). It participates in isoprenoid biosynthesis; isopentenyl diphosphate biosynthesis via DXP pathway; isopentenyl diphosphate from 1-deoxy-D-xylulose 5-phosphate: step 1/6. Catalyzes the NADPH-dependent rearrangement and reduction of 1-deoxy-D-xylulose-5-phosphate (DXP) to 2-C-methyl-D-erythritol 4-phosphate (MEP). This chain is 1-deoxy-D-xylulose 5-phosphate reductoisomerase, found in Shewanella sp. (strain MR-4).